We begin with the raw amino-acid sequence, 498 residues long: Myotilin (498 aa).

3 disordered regions span residues 1–46 (MFNY…QPRQ), 64–151 (MSSS…HEIQ), and 202–241 (QDDS…NDQD). Arg20 is modified (omega-N-methylarginine). A compositionally biased stretch (low complexity) spans 29–43 (SSFSSQTKQSSIIIQ). The span at 77 to 138 (AGSNPGQRVT…INAKPSQTAN (62 aa)) shows a compositional bias: polar residues. The segment at 79 to 150 (SNPGQRVTTT…PIPRTPDHEI (72 aa)) is necessary for interaction with ACTN1. Residues 202-212 (QDDSGAQDSQQ) show a composition bias toward low complexity. The necessary for interaction with FLNC stretch occupies residues 215–493 (SEHARLQVPT…QRLAAQSGLY (279 aa)). Residues 215–498 (SEHARLQVPT…QSGLYESEEL (284 aa)) form a necessary for interaction with ACTA1 region. Residues 222–235 (VPTSQVRSRSTSRG) show a composition bias toward polar residues. Ig-like C2-type domains follow at residues 250–335 (PRFI…ATFT) and 349–441 (PMFI…LDVT).

This sequence belongs to the myotilin/palladin family. In terms of assembly, homodimer. Interacts with ACTA1, ACTN1, FLNA, FLNB, FLNC and MYOZ2. Interacts with the C-terminal region of MYOZ1. In terms of tissue distribution, expressed in skeletal muscle (at protein level). Expressed in skeletal muscle, heart, bone marrow and thyroid gland.

Its subcellular location is the cell membrane. It is found in the sarcolemma. It localises to the cytoplasm. The protein resides in the cytoskeleton. The protein localises to the myofibril. Its subcellular location is the sarcomere. It is found in the z line. Functionally, component of a complex of multiple actin cross-linking proteins. Involved in the control of myofibril assembly and stability at the Z lines in muscle cells. This is Myotilin (MYOT) from Homo sapiens (Human).